The sequence spans 134 residues: MASEKKVLGFEEVSQHNKTKDCWLIISGKVYDVTPFMDDHPGGDEVLLSSTGKDATNDFEDVGHSDTARDMMEKYYIGEIDSSTVPATRTYVAPVQPAYNQDKTPEFMIKILQFLVPILILGLALVVRQYTKKE.

The region spanning Lys-5–Asp-81 is the Cytochrome b5 heme-binding domain. Residues His-40 and His-64 each coordinate heme. A helical membrane pass occupies residues Phe-107–Val-127.

The protein belongs to the cytochrome b5 family.

Its subcellular location is the endoplasmic reticulum membrane. The protein localises to the microsome membrane. Its function is as follows. Membrane bound hemoprotein which function as an electron carrier for several membrane bound oxygenases. The sequence is that of Cytochrome b5 (CYB5) from Brassica oleracea var. botrytis (Cauliflower).